Reading from the N-terminus, the 292-residue chain is 4-hydroxy-tetrahydrodipicolinate synthase (292 aa).

Residue Thr45 participates in pyruvate binding. The active-site Proton donor/acceptor is the Tyr133. Lys161 serves as the catalytic Schiff-base intermediate with substrate. Ile203 serves as a coordination point for pyruvate.

It belongs to the DapA family. In terms of assembly, homotetramer; dimer of dimers.

It localises to the cytoplasm. It catalyses the reaction L-aspartate 4-semialdehyde + pyruvate = (2S,4S)-4-hydroxy-2,3,4,5-tetrahydrodipicolinate + H2O + H(+). The protein operates within amino-acid biosynthesis; L-lysine biosynthesis via DAP pathway; (S)-tetrahydrodipicolinate from L-aspartate: step 3/4. In terms of biological role, catalyzes the condensation of (S)-aspartate-beta-semialdehyde [(S)-ASA] and pyruvate to 4-hydroxy-tetrahydrodipicolinate (HTPA). This Shigella dysenteriae serotype 1 (strain Sd197) protein is 4-hydroxy-tetrahydrodipicolinate synthase.